A 196-amino-acid chain; its full sequence is Nucleoid occlusion factor SlmA (196 aa).

In terms of domain architecture, HTH tetR-type spans 7–68 (SNRREEILQA…GLIEFIEEAL (62 aa)). Positions 31 to 50 (TTVKLAKQVGVSEAALYRHF) form a DNA-binding region, H-T-H motif. Positions 65–142 (EEALMSRINR…QLRQILRERK (78 aa)) form a coiled coil.

It belongs to the nucleoid occlusion factor SlmA family. Homodimer. Interacts with FtsZ.

The protein resides in the cytoplasm. The protein localises to the nucleoid. Required for nucleoid occlusion (NO) phenomenon, which prevents Z-ring formation and cell division over the nucleoid. Acts as a DNA-associated cell division inhibitor that binds simultaneously chromosomal DNA and FtsZ, and disrupts the assembly of FtsZ polymers. SlmA-DNA-binding sequences (SBS) are dispersed on non-Ter regions of the chromosome, preventing FtsZ polymerization at these regions. The chain is Nucleoid occlusion factor SlmA from Vibrio atlanticus (strain LGP32) (Vibrio splendidus (strain Mel32)).